We begin with the raw amino-acid sequence, 636 residues long: Translation factor GUF1 homolog, chloroplastic (636 aa).

Residues 31-212 (NLARNFSIIA…AIVTKIPPPQ (182 aa)) form the tr-type G domain. GTP is bound by residues 40–47 (AHIDHGKS), 105–109 (DTPGH), and 159–162 (NKID).

This sequence belongs to the TRAFAC class translation factor GTPase superfamily. Classic translation factor GTPase family. LepA subfamily.

Its subcellular location is the plastid. The protein localises to the chloroplast. The catalysed reaction is GTP + H2O = GDP + phosphate + H(+). Its function is as follows. Promotes chloroplast protein synthesis. May act as a fidelity factor of the translation reaction, by catalyzing a one-codon backward translocation of tRNAs on improperly translocated ribosomes. This Oryza sativa subsp. indica (Rice) protein is Translation factor GUF1 homolog, chloroplastic.